Here is a 215-residue protein sequence, read N- to C-terminus: ATP-dependent Clp protease proteolytic subunit 1 (215 aa).

The Nucleophile role is filled by Ser108. His133 is a catalytic residue.

Belongs to the peptidase S14 family. In terms of assembly, fourteen ClpP subunits assemble into 2 heptameric rings which stack back to back to give a disk-like structure with a central cavity, resembling the structure of eukaryotic proteasomes.

It localises to the cytoplasm. It carries out the reaction Hydrolysis of proteins to small peptides in the presence of ATP and magnesium. alpha-casein is the usual test substrate. In the absence of ATP, only oligopeptides shorter than five residues are hydrolyzed (such as succinyl-Leu-Tyr-|-NHMec, and Leu-Tyr-Leu-|-Tyr-Trp, in which cleavage of the -Tyr-|-Leu- and -Tyr-|-Trp bonds also occurs).. Functionally, cleaves peptides in various proteins in a process that requires ATP hydrolysis. Has a chymotrypsin-like activity. Plays a major role in the degradation of misfolded proteins. The sequence is that of ATP-dependent Clp protease proteolytic subunit 1 from Paraburkholderia xenovorans (strain LB400).